Reading from the N-terminus, the 464-residue chain is Rhodopsin (464 aa).

Topologically, residues 1 to 33 are extracellular; that stretch reads MGRDIPDNETWWYNPTMEVHPHWKQFNQVPDAV. A glycan (N-linked (GlcNAc...) asparagine) is linked at asparagine 8. A helical membrane pass occupies residues 34–58; it reads YYSLGIFIGICGIIGCTGNGIVIYL. Residues 59–70 are Cytoplasmic-facing; sequence FTKTKSLQTPAN. A helical transmembrane segment spans residues 71-97; the sequence is MFIINLAFSDFTFSLVNGFPLMTISCF. Topologically, residues 98 to 109 are extracellular; that stretch reads IKKWVFGMAACK. A disulfide bridge connects residues cysteine 108 and cysteine 186. Residues 110-131 traverse the membrane as a helical segment; it reads VYGFIGGIFGLMSIMTMSMISI. A 'Ionic lock' involved in activated form stabilization motif is present at residues 132–134; sequence DRY. Topologically, residues 132-151 are cytoplasmic; it reads DRYNVIGRPMAASKKMSHRR. Residues 152–172 traverse the membrane as a helical segment; it reads AFLMIIFVWMWSTLWSIGPIF. Residues 173-199 lie on the Extracellular side of the membrane; the sequence is GWGAYVLEGVLCNCSFDYITRDSATRS. The helical transmembrane segment at 200 to 224 threads the bilayer; that stretch reads NIVCMYIFAFCFPILIIFFCYFNIV. The Cytoplasmic segment spans residues 225–261; sequence MAVSNHEKEMAAMAKRLNAKELRKAQAGASAEMKLAK. Residues 262-283 traverse the membrane as a helical segment; it reads ISIVIVTQFLLSWSPYAVVALL. Residues 284 to 293 lie on the Extracellular side of the membrane; it reads AQFGPIEWVT. The chain crosses the membrane as a helical span at residues 294–315; sequence PYAAQLPVMFAKASAIHNPLIY. At lysine 305 the chain carries N6-(retinylidene)lysine. Over 316–464 the chain is Cytoplasmic; it reads SVSHPKFREA…QGVDNQAYQA (149 aa). 2 S-palmitoyl cysteine lipidation sites follow: cysteine 336 and cysteine 337. The disordered stretch occupies residues 344 to 464; it reads VEDDKDAETE…QGVDNQAYQA (121 aa). Residues 367–401 are compositionally biased toward low complexity; sequence AAQMKEMMAMMQKMQQQQAAYPPQGAYPPQGGYPP. Composition is skewed to pro residues over residues 416 to 425 and 434 to 452; these read QGYPPPPQGY and QGYP…PQAA.

The protein belongs to the G-protein coupled receptor 1 family. Opsin subfamily. Contains one covalently linked retinal chromophore. Upon light absorption, the covalently bound 11-cis-retinal is converted to all-trans-retinal. After hydrolysis of the Schiff base and release of the covalently bound all-trans-retinal, active rhodopsin is regenerated by binding of a fresh molecule of 11-cis-retinal.

The protein resides in the cell projection. It is found in the rhabdomere membrane. Its function is as follows. Photoreceptor required for image-forming vision at low light intensity. Light-induced isomerization of 11-cis to all-trans retinal triggers a conformational change that activates signaling via G-proteins. Signaling mediates the activation of phospholipase C. Subsequent receptor phosphorylation mediates displacement of the bound G-protein alpha subunit by arrestin and terminates signaling. In Sepia officinalis (Common cuttlefish), this protein is Rhodopsin (RHO).